A 254-amino-acid chain; its full sequence is Phosphoribosylaminoimidazole-succinocarboxamide synthase (254 aa).

This sequence belongs to the SAICAR synthetase family.

The enzyme catalyses 5-amino-1-(5-phospho-D-ribosyl)imidazole-4-carboxylate + L-aspartate + ATP = (2S)-2-[5-amino-1-(5-phospho-beta-D-ribosyl)imidazole-4-carboxamido]succinate + ADP + phosphate + 2 H(+). It functions in the pathway purine metabolism; IMP biosynthesis via de novo pathway; 5-amino-1-(5-phospho-D-ribosyl)imidazole-4-carboxamide from 5-amino-1-(5-phospho-D-ribosyl)imidazole-4-carboxylate: step 1/2. In Acidiphilium cryptum (strain JF-5), this protein is Phosphoribosylaminoimidazole-succinocarboxamide synthase.